The following is a 381-amino-acid chain: Cytochrome b (381 aa).

Transmembrane regions (helical) follow at residues 34-54, 78-99, 114-134, and 179-199; these read FGSLLGLCLIIQILTGLFLAM, WLIRNIHANGASLFFICVYLHI, WNIGVILLFLLMATAFVGYVL, and FFAFHFLLPFLILALTIIHLL. Residues His-84 and His-98 each contribute to the heme b site. Heme b contacts are provided by His-183 and His-197. Position 202 (His-202) interacts with a ubiquinone. Helical transmembrane passes span 227–247, 289–309, 321–341, and 348–368; these read YKDLLGFFVMIFFLAVFALFM, LGGVLALLFSIFILMLVPLLH, MTQIFFWLLVANSIILTWIGG, and FIMVGQIASISYFSLFLIIMP.

Belongs to the cytochrome b family. In terms of assembly, the cytochrome bc1 complex contains 3 respiratory subunits (MT-CYB, CYC1 and UQCRFS1), 2 core proteins (UQCRC1 and UQCRC2) and probably 6 low-molecular weight proteins. It depends on heme b as a cofactor.

The protein localises to the mitochondrion inner membrane. In terms of biological role, component of the ubiquinol-cytochrome c reductase complex (complex III or cytochrome b-c1 complex) that is part of the mitochondrial respiratory chain. The b-c1 complex mediates electron transfer from ubiquinol to cytochrome c. Contributes to the generation of a proton gradient across the mitochondrial membrane that is then used for ATP synthesis. The polypeptide is Cytochrome b (mt-cyb) (Carcharhinus plumbeus (Sandbar shark)).